A 102-amino-acid polypeptide reads, in one-letter code: Aspartyl/glutamyl-tRNA(Asn/Gln) amidotransferase subunit C (102 aa).

Belongs to the GatC family. In terms of assembly, heterotrimer of A, B and C subunits.

The catalysed reaction is L-glutamyl-tRNA(Gln) + L-glutamine + ATP + H2O = L-glutaminyl-tRNA(Gln) + L-glutamate + ADP + phosphate + H(+). It carries out the reaction L-aspartyl-tRNA(Asn) + L-glutamine + ATP + H2O = L-asparaginyl-tRNA(Asn) + L-glutamate + ADP + phosphate + 2 H(+). In terms of biological role, allows the formation of correctly charged Asn-tRNA(Asn) or Gln-tRNA(Gln) through the transamidation of misacylated Asp-tRNA(Asn) or Glu-tRNA(Gln) in organisms which lack either or both of asparaginyl-tRNA or glutaminyl-tRNA synthetases. The reaction takes place in the presence of glutamine and ATP through an activated phospho-Asp-tRNA(Asn) or phospho-Glu-tRNA(Gln). The polypeptide is Aspartyl/glutamyl-tRNA(Asn/Gln) amidotransferase subunit C (Lactobacillus acidophilus (strain ATCC 700396 / NCK56 / N2 / NCFM)).